Reading from the N-terminus, the 72-residue chain is Penaeidin-2b (72 aa).

The N-terminal stretch at 1 to 21 (MRLVVCLVFLASFALVCQGEA) is a signal peptide. Disulfide bonds link C45–C59, C48–C66, and C60–C67. K71 bears the Lysine amide mark.

This sequence belongs to the penaeidin family.

The protein localises to the cytoplasmic granule. Its function is as follows. Antibacterial and antifungal activity. Presents chitin-binding activity. This is Penaeidin-2b from Penaeus vannamei (Whiteleg shrimp).